Here is a 430-residue protein sequence, read N- to C-terminus: N-acylneuraminate cytidylyltransferase A (430 aa).

Residues 1 to 29 form a disordered region; it reads MDAVNENGKRAMKDDSHGNSTSPKRRKSR. The segment covering 7–17 has biased composition (basic and acidic residues); the sequence is NGKRAMKDDSH. The Bipartite nuclear localization signal signature appears at 9 to 27; that stretch reads KRAMKDDSHGNSTSPKRRK. Residues R38, N48, R97, S106, S108, and Q129 each coordinate substrate. The active site involves R187.

It belongs to the CMP-NeuNAc synthase family. In terms of assembly, homotetramer.

It is found in the nucleus. The catalysed reaction is an N-acylneuraminate + CTP = a CMP-N-acyl-beta-neuraminate + diphosphate. It participates in amino-sugar metabolism; N-acetylneuraminate metabolism. In terms of biological role, catalyzes the activation of N-acetylneuraminic acid (NeuNAc) to cytidine 5'-monophosphate N-acetylneuraminic acid (CMP-NeuNAc), a substrate required for the addition of sialic acid. Also has activity towards N-glycolylneuraminic acid (Neu5Gc). Has weak activity towards 2-keto-3-deoxy-D-glycero-D-galacto-nononic acid (KDN). The sequence is that of N-acylneuraminate cytidylyltransferase A from Danio rerio (Zebrafish).